Consider the following 189-residue polypeptide: Ribosome maturation factor RimM (189 aa).

One can recognise a PRC barrel domain in the interval 110-189; the sequence is DDEYYWKDLI…TVTVDWDPNF (80 aa).

The protein belongs to the RimM family. As to quaternary structure, binds ribosomal protein uS19.

The protein resides in the cytoplasm. An accessory protein needed during the final step in the assembly of 30S ribosomal subunit, possibly for assembly of the head region. Essential for efficient processing of 16S rRNA. May be needed both before and after RbfA during the maturation of 16S rRNA. It has affinity for free ribosomal 30S subunits but not for 70S ribosomes. The protein is Ribosome maturation factor RimM of Blochmanniella pennsylvanica (strain BPEN).